A 373-amino-acid chain; its full sequence is Mitochondrial fission regulator 2 (373 aa).

Serine 136 carries the phosphoserine modification. Residues 151–179 (VSEAAIKKIAALEDELTSLRAQIAAIVAM) adopt a coiled-coil conformation. Disordered regions lie at residues 189–331 (GFIS…WDPV) and 346–373 (DDSF…GSRF). The span at 224–239 (SPPPLPPPPPPLPPPQ) shows a compositional bias: pro residues. Basic and acidic residues-rich tracts occupy residues 275 to 287 (KKTD…ESQR) and 297 to 310 (VLKD…RPVE). Phosphoserine is present on residues serine 312 and serine 348. Residues 354 to 373 (RSWQGSPFSSPETSRNGSRF) are compositionally biased toward polar residues.

Belongs to the MTFR1 family.

It is found in the mitochondrion. Functionally, may play a role in mitochondrial aerobic respiration essentially in the testis. Can also promote mitochondrial fission. The polypeptide is Mitochondrial fission regulator 2 (Mtfr2) (Rattus norvegicus (Rat)).